Consider the following 318-residue polypeptide: DNA repair nuclease/redox regulator APEX1 (318 aa).

A disordered region spans residues 1–59 (MPKRGKKGAVVEDAEEPKTEPEAKKSKAGAKKNEKEAVGEGAVLYEDPPDQKTSPSGKS). A necessary for interaction with YBX1, binding to RNA, association together with NPM1 to rRNA, endoribonuclease activity on abasic RNA and localization in the nucleoli region spans residues 2-33 (PKRGKKGAVVEDAEEPKTEPEAKKSKAGAKKN). 2 positions are modified to N6-acetyllysine; by EP300: lysine 6 and lysine 7. The Nuclear localization signal (NLS) motif lies at 8-13 (GAVVED). Over residues 16–38 (EPKTEPEAKKSKAGAKKNEKEAV) the composition is skewed to basic and acidic residues. The interval 23 to 33 (AKKSKAGAKKN) is necessary for interaction with NPM1 and for efficient rRNA binding. Lysine 27, lysine 31, lysine 32, and lysine 35 each carry N6-acetyllysine. Serine 54 carries the phosphoserine modification. The Nuclear export signal (NES) motif lies at 64–80 (ICSWNVDGLRAWIKKKG). The residue at position 65 (cysteine 65) is an S-nitrosocysteine; alternate. Cysteine 65 and cysteine 93 are joined by a disulfide. Aspartate 70 is a Mg(2+) binding site. Cysteine 93 is subject to S-nitrosocysteine; alternate. Glutamate 96 is a binding site for Mg(2+). Residue tyrosine 171 is part of the active site. Lysine 197 bears the N6-acetyllysine mark. Positions 210 and 212 each coordinate Mg(2+). The Proton donor/acceptor role is filled by aspartate 210. Threonine 233 bears the Phosphothreonine; by CDK5 mark. The mitochondrial targeting sequence (MTS) stretch occupies residues 289 to 318 (QSVLPALCDSKIRSKALGSDHCPITLYLAL). Aspartate 308 serves as a coordination point for Mg(2+). S-nitrosocysteine is present on cysteine 310.

The protein belongs to the DNA repair enzymes AP/ExoA family. Monomer. Homodimer; disulfide-linked. Component of the SET complex, composed of at least APEX1, SET, ANP32A, HMGB2, NME1 and TREX1. Associates with the dimer XRCC5/XRCC6 in a DNA-dependent manner. Interacts with SIRT1; the interaction is increased in the context of genotoxic stress. Interacts with HDAC1, HDAC2 and HDAC3; the interactions are not dependent on the APEX1 acetylation status. Interacts with XRCC1; the interaction is induced by SIRT1 and increased with the APEX1 acetylated form. Interacts with NPM1 (via N-terminal domain); the interaction is RNA-dependent and decreases in hydrogen peroxide-damaged cells. Interacts (via N-terminus) with YBX1 (via C-terminus); the interaction is increased in presence of APEX1 acetylated at Lys-6 and Lys-7. Interacts with HNRNPL; the interaction is DNA-dependent. Interacts (via N-terminus) with KPNA1 and KPNA2. Interacts with TXN; the interaction stimulates the FOS/JUN AP-1 complex DNA-binding activity in a redox-dependent manner. Interacts with GZMA, KRT8, MDM2, POLB, PRDX6, PRPF19, RPLP0, TOMM20 and WDR77. Binds to CDK5. It depends on Mg(2+) as a cofactor. Mn(2+) serves as cofactor. Post-translationally, phosphorylated. Phosphorylation by kinase PKC or casein kinase CK2 results in enhanced redox activity that stimulates binding of the FOS/JUN AP-1 complex to its cognate binding site. AP-endodeoxyribonuclease activity is not affected by CK2-mediated phosphorylation. Phosphorylation of Thr-233 by CDK5 in response to MPP(+)/MPTP (1-methyl-4-phenylpyridinium) reduces AP-endodeoxyribonuclease activity resulting in accumulation of DNA damage and contributing to neuronal death. Acetylated on Lys-6 and Lys-7. Acetylation is increased by the transcriptional coactivator EP300 acetyltransferase, genotoxic agents like H(2)O(2) and methyl methanesulfonate (MMS). Acetylation increases its binding affinity to the negative calcium response element (nCaRE) DNA promoter. The acetylated form induces a stronger binding of YBX1 to the Y-box sequence in the MDR1 promoter than the unacetylated form. Deacetylated on lysines. Lys-6 and Lys-7 are deacetylated by SIRT1. In terms of processing, cleaved at Lys-31 by granzyme A to create the mitochondrial form; leading in reduction of binding to DNA, AP endodeoxyribonuclease activity, redox activation of transcription factors and to enhanced cell death. Cleaved by granzyme K; leading to intracellular ROS accumulation and enhanced cell death after oxidative stress. Post-translationally, cys-69 and Cys-93 are nitrosylated in response to nitric oxide (NO) and lead to the exposure of the nuclear export signal (NES). Ubiquitinated by MDM2; leading to translocation to the cytoplasm and proteasomal degradation. In terms of tissue distribution, the mitochondrial form is expressed in liver (at protein level). Thymus.

It is found in the nucleus. The protein localises to the nucleolus. The protein resides in the nucleus speckle. It localises to the endoplasmic reticulum. Its subcellular location is the cytoplasm. It is found in the mitochondrion. It catalyses the reaction Exonucleolytic cleavage in the 3'- to 5'-direction to yield nucleoside 5'-phosphates.. Its activity is regulated as follows. NPM1 stimulates endodeoxyribonuclease activity on double-stranded DNA with AP sites, but inhibits endoribonuclease activity on single-stranded RNA containing AP sites. Its function is as follows. Multifunctional protein that plays a central role in the cellular response to oxidative stress. The two major activities of APEX1 are DNA repair and redox regulation of transcriptional factors. Functions as an apurinic/apyrimidinic (AP) endodeoxyribonuclease in the DNA base excision repair (BER) pathway of DNA lesions induced by oxidative and alkylating agents. Initiates repair of AP sites in DNA by catalyzing hydrolytic incision of the phosphodiester backbone immediately adjacent to the damage, generating a single-strand break with 5'-deoxyribose phosphate and 3'-hydroxyl ends. Also incises at AP sites in the DNA strand of DNA/RNA hybrids, single-stranded DNA regions of R-loop structures, and single-stranded RNA molecules. Has 3'-5' exoribonuclease activity on mismatched deoxyribonucleotides at the 3' termini of nicked or gapped DNA molecules during short-patch BER. Possesses DNA 3' phosphodiesterase activity capable of removing lesions (such as phosphoglycolate) blocking the 3' side of DNA strand breaks. May also play a role in the epigenetic regulation of gene expression by participating in DNA demethylation. Acts as a loading factor for POLB onto non-incised AP sites in DNA and stimulates the 5'-terminal deoxyribose 5'-phosphate (dRp) excision activity of POLB. Plays a role in the protection from granzyme-mediated cellular repair leading to cell death. Also involved in the DNA cleavage step of class switch recombination (CSR). On the other hand, APEX1 also exerts reversible nuclear redox activity to regulate DNA binding affinity and transcriptional activity of transcriptional factors by controlling the redox status of their DNA-binding domain, such as the FOS/JUN AP-1 complex after exposure to IR. Involved in calcium-dependent down-regulation of parathyroid hormone (PTH) expression by binding to negative calcium response elements (nCaREs). Together with HNRNPL or the dimer XRCC5/XRCC6, associates with nCaRE, acting as an activator of transcriptional repression. Stimulates the YBX1-mediated MDR1 promoter activity, when acetylated at Lys-6 and Lys-7, leading to drug resistance. Also acts as an endoribonuclease involved in the control of single-stranded RNA metabolism. Plays a role in regulating MYC mRNA turnover by preferentially cleaving in between UA and CA dinucleotides of the MYC coding region determinant (CRD). In association with NMD1, plays a role in the rRNA quality control process during cell cycle progression. Associates, together with YBX1, on the MDR1 promoter. Together with NPM1, associates with rRNA. Binds DNA and RNA. The sequence is that of DNA repair nuclease/redox regulator APEX1 (APEX1) from Bos taurus (Bovine).